A 480-amino-acid polypeptide reads, in one-letter code: NADH-quinone oxidoreductase subunit N 1 (480 aa).

Helical transmembrane passes span 12-32, 38-58, 78-98, 106-126, 128-148, 163-183, 203-223, 241-261, 271-291, 303-323, 326-346, 372-392, 396-416, and 449-469; these read LSMPELILAVGAMALLMIGVF, TPTVTGLAVAVLIIAGLWLVL, FMKVLALIGSITVMVMTVGHA, FEFPVLLVLATLGMLLMISAN, LISLYLSLELQSLALYVVAAI, FVLGALSSGMMLYGMSLVYGF, LGLVFGLVFILAGLAFKISAV, TAFFAAGPKVAAISILVRIVI, WQQIIVFISIASMLLGSFAAI, SSIGHMGYALVGLAAGSMAGV, VILYMLIYMVMTLGTFACILA, ATVLTILMFSLAGIPPLAGFF, FVFVAAIEAQLYGLAIIGVLA, and LVFGLSGLFVLGYVLIGGPLG.

This sequence belongs to the complex I subunit 2 family. As to quaternary structure, NDH-1 is composed of 14 different subunits. Subunits NuoA, H, J, K, L, M, N constitute the membrane sector of the complex.

The protein localises to the cell inner membrane. The enzyme catalyses a quinone + NADH + 5 H(+)(in) = a quinol + NAD(+) + 4 H(+)(out). Functionally, NDH-1 shuttles electrons from NADH, via FMN and iron-sulfur (Fe-S) centers, to quinones in the respiratory chain. The immediate electron acceptor for the enzyme in this species is believed to be ubiquinone. Couples the redox reaction to proton translocation (for every two electrons transferred, four hydrogen ions are translocated across the cytoplasmic membrane), and thus conserves the redox energy in a proton gradient. The chain is NADH-quinone oxidoreductase subunit N 1 from Rhizobium meliloti (strain 1021) (Ensifer meliloti).